The following is a 183-amino-acid chain: NADH-quinone oxidoreductase subunit A (183 aa).

A run of 3 helical transmembrane segments spans residues 11–31 (IIAFVIGVTFLCVFMLTVPLL), 63–83 (FYLVAIFFVVFDLEALYLYAW), and 98–118 (VVIFVVDLLIALVYAFSVGAL). Residues 159–183 (TGQIPAQSSGRVKSKTTPALSSEKE) form a disordered region.

Belongs to the complex I subunit 3 family. As to quaternary structure, NDH-1 is composed of 14 different subunits. Subunits NuoA, H, J, K, L, M, N constitute the membrane sector of the complex.

The protein resides in the cell inner membrane. The catalysed reaction is a quinone + NADH + 5 H(+)(in) = a quinol + NAD(+) + 4 H(+)(out). NDH-1 shuttles electrons from NADH, via FMN and iron-sulfur (Fe-S) centers, to quinones in the respiratory chain. The immediate electron acceptor for the enzyme in this species is believed to be ubiquinone. Couples the redox reaction to proton translocation (for every two electrons transferred, four hydrogen ions are translocated across the cytoplasmic membrane), and thus conserves the redox energy in a proton gradient. This chain is NADH-quinone oxidoreductase subunit A, found in Acinetobacter baumannii (strain ACICU).